A 1961-amino-acid polypeptide reads, in one-letter code: Ankyrin-3 (1961 aa).

Residues 1–10 show a composition bias toward basic and acidic residues; the sequence is MSEEPKEKPA. Positions 1-25 are disordered; sequence MSEEPKEKPAKPAHRKRKGKKSDAN. A compositionally biased stretch (basic residues) spans 11 to 20; the sequence is KPAHRKRKGK. Ser22 is subject to Phosphoserine. ANK repeat units follow at residues 56 to 85, 89 to 118, 122 to 151, 155 to 184, 186 to 213, 217 to 246, 250 to 279, 283 to 312, 316 to 345, 349 to 378, 382 to 411, 415 to 444, 448 to 477, 481 to 510, 514 to 543, 547 to 576, 580 to 609, 613 to 642, 646 to 675, 679 to 708, 712 to 741, 745 to 774, and 778 to 807; these read NGLN…NVDA, KGNT…NVNA, NGFT…SQSL, DGFT…KGKV, LPAL…NADV, SGFT…AVDF, NDIT…KIDA, DGLT…PILS, NGLS…PVDD, DYLT…SPNA, NGFT…SIQA, SGLT…SPNT, RGET…QVEA, DDQT…SPNA, SGYT…SLSI, KGFT…SPDA, SGLT…SPHA, NGYT…DANA, QGIA…NVNL, SGLT…HVDA, MGYT…KVNA, NGYT…SPNE, and NGNT…EIMT. Ser606 is subject to Phosphoserine. Position 732 is a phosphoserine (Leu732). 10 positions are modified to phosphoserine: Ser830, Ser844, Ser850, Ser873, Ser914, Ser917, Ser923, Ser958, Ser960, and Ser1114. ZU5 domains follow at residues 985 to 1140 and 1142 to 1289; these read FLVS…VVSR and KQES…LADC. The UPA domain stretch occupies residues 1274–1408; it reads VSFTTNVSAR…SIKIRDTSQE (135 aa). Ser1451, Ser1462, Ser1470, Ser1473, and Gly1560 each carry phosphoserine. In terms of domain architecture, Death spans 1478-1562; the sequence is TDIRMAIVAD…DIVTLLEGPI (85 aa). 5 disordered regions span residues 1606–1678, 1698–1740, 1784–1818, 1844–1884, and 1915–1961; these read PNPF…DPLD, SVPG…VTED, WQNE…DQAR, PEAK…PVSP, and MTRT…KKTH. Residues 1725-1740 are compositionally biased toward basic and acidic residues; that stretch reads QQEKGKSGPDEEVTED. A compositionally biased stretch (polar residues) spans 1784–1795; sequence WQNETPSGSLES. A phosphoserine mark is found at Ser1795, Ser1813, and Ser1883. The segment covering 1808–1818 has biased composition (basic and acidic residues); that stretch reads DRLDDSSDQAR. The segment covering 1933–1961 has biased composition (basic and acidic residues); sequence GSTRSEPKQGEGYKVKTKKEIRNVEKKTH.

In terms of assembly, may be a constituent of a NFASC/NRCAM/ankyrin G complex. Interacts with RHBG. Directly interacts with DMD and betaDAG1; this interaction does not interfere with DMD-binding and is required for DMD and betaDAG1 retention at costameres. Interacts (via N-terminal ANK repeats) with SCHIP1 isoform 7 (via C-terminus); this interaction is required for the localization at axon initial segments (AISs) and nodes of Ranvier (NRs). Interacts with PLEC and FLNC. Interacts with KCNA1; this inhibits channel activity. Interacts with SCN5A. Interacts with PKP2 and GJA1/CX43. As to expression, expressed in many epithelial tissues, muscles and axons. Expressed in kidney, brain, skin, lung, liver, intestine, pancreas, heart and testis (at protein level). In testis, expressed in Leydig cells, but very weakly or not at all in Sertoli cells or seminiferous tubules. Expressed in macrophages (at protein level).

The protein resides in the cytoplasm. The protein localises to the cytoskeleton. It is found in the cell projection. It localises to the axon. Its subcellular location is the cell membrane. The protein resides in the sarcolemma. The protein localises to the postsynaptic cell membrane. It is found in the lysosome. It localises to the T-tubule. Its function is as follows. Membrane-cytoskeleton linker. May participate in the maintenance/targeting of ion channels and cell adhesion molecules at the nodes of Ranvier and axonal initial segments. In skeletal muscle, required for costamere localization of DMD and betaDAG1. Regulates KCNA1 channel activity in function of dietary Mg(2+) levels, and thereby contributes to the regulation of renal Mg(2+) reabsorption. Required for intracellular adhesion and junctional conductance in myocytes, potentially via stabilization of GJA1/CX43 protein abundance and promotion of PKP2, GJA1/CX43, and SCN5A/Nav1.5 localization to cell-cell junctions. This chain is Ankyrin-3 (Ank3), found in Mus musculus (Mouse).